The following is a 178-amino-acid chain: ATP-dependent protease subunit HslV (178 aa).

Residue Thr8 is part of the active site. Na(+) contacts are provided by Gly163, Cys166, and Thr169.

Belongs to the peptidase T1B family. HslV subfamily. A double ring-shaped homohexamer of HslV is capped on each side by a ring-shaped HslU homohexamer. The assembly of the HslU/HslV complex is dependent on binding of ATP.

It is found in the cytoplasm. It carries out the reaction ATP-dependent cleavage of peptide bonds with broad specificity.. With respect to regulation, allosterically activated by HslU binding. Functionally, protease subunit of a proteasome-like degradation complex believed to be a general protein degrading machinery. The protein is ATP-dependent protease subunit HslV of Xylella fastidiosa (strain 9a5c).